The sequence spans 393 residues: NAD(P)H-quinone oxidoreductase subunit H, chloroplastic (393 aa).

Belongs to the complex I 49 kDa subunit family. NDH is composed of at least 16 different subunits, 5 of which are encoded in the nucleus.

The protein localises to the plastid. It is found in the chloroplast thylakoid membrane. The enzyme catalyses a plastoquinone + NADH + (n+1) H(+)(in) = a plastoquinol + NAD(+) + n H(+)(out). It carries out the reaction a plastoquinone + NADPH + (n+1) H(+)(in) = a plastoquinol + NADP(+) + n H(+)(out). In terms of biological role, NDH shuttles electrons from NAD(P)H:plastoquinone, via FMN and iron-sulfur (Fe-S) centers, to quinones in the photosynthetic chain and possibly in a chloroplast respiratory chain. The immediate electron acceptor for the enzyme in this species is believed to be plastoquinone. Couples the redox reaction to proton translocation, and thus conserves the redox energy in a proton gradient. The chain is NAD(P)H-quinone oxidoreductase subunit H, chloroplastic from Crucihimalaya wallichii (Rock-cress).